Here is a 43-residue protein sequence, read N- to C-terminus: Protein PsbN (43 aa).

A helical transmembrane segment spans residues 5–27; it reads TLVAISISGSLVSFTGYALYTAF.

This sequence belongs to the PsbN family.

The protein resides in the plastid. It is found in the chloroplast thylakoid membrane. May play a role in photosystem I and II biogenesis. In Drimys granadensis, this protein is Protein PsbN.